A 347-amino-acid polypeptide reads, in one-letter code: Subtilase cytotoxin subunit A (347 aa).

The signal sequence occupies residues 1–21 (MLKILWTYILFLLFISASARA). Residues 24–327 (PWYFDAIGLT…GRVLNAEKAI (304 aa)) form the Peptidase S8 domain. Catalysis depends on charge relay system residues Asp-52, His-89, and Ser-272. Residues Cys-288 and Cys-331 are joined by a disulfide bond. The A2 domain stretch occupies residues 322–347 (NAEKAISMFCKKNYIPVRQGRMSEEL). Residues 344 to 347 (SEEL) carry the Prevents secretion from ER motif.

Belongs to the peptidase S8 family. In terms of assembly, forms a complex with SubB with the stoichiometry SubA1:SubB5 (called SubAB5).

Its subcellular location is the secreted. The protein localises to the host cytoplasm. The protein resides in the host cytosol. It is found in the host endoplasmic reticulum lumen. Functionally, protease subunit of subtilase cytotoxin SubAB5. An endoprotease specific for host endoplasmic reticulum (ER) chaperone BiP/HSPA5, has no activity on human HSP70 or HSPA8. Cleaves between 'Leu-416' and 'Leu-417' of BiP/HSPA5 in the hinge between BiP's ATPase and protein-binding domains. This induces host ER stress response and eventual cell death. Culture supernatant of E.coli expressing both subA and subB are toxic for Vero cells (African green monkey kidney cell line), Chinese hamster ovary cells and Hct-8 cells (human colonic epithelial cell line); the subunits are not toxic individually. Purified SubAB5 is highly toxic, &lt;0.1 pg is able to kill at least 50% of 30'000 Vero cells in a microtiter plate assay after 3 days; no cytotoxicity is seen at 24 hours. Preabsorption with cells expressing a ganglioside GM2 mimic reduced cytotoxicity of SubAB5 by 93% in the Vero cytotoxicity assay. Intraperitoneal injection of 200 ng of purified SubAB5 kills mice; the higher the dose the faster the mice die. Animals injected intraperitoneally with purified SubAB5 have microvascular thrombi in the brain and other organs, including the renal tubules and glomeruli. Injection induces an unfolded response in mice. Mice fed E.coli cells expressing cloned SubAB5 experience drastic weight loss and appear ill and lethargic. Protein synthesis in Vero cells is transiently inhibited by SubAB5; both subunits are required for this effect. Inhibition of protein synthesis is prevented by brefeldin A; cells are arrested in the G1 phase. SubAB5 at 100 ng/ml induced caspase-dependent apoptosis in Vero cells through mitochondrial membrane damage. This Escherichia coli protein is Subtilase cytotoxin subunit A.